A 187-amino-acid polypeptide reads, in one-letter code: Pre-mRNA-splicing factor cwf7 (187 aa).

The protein belongs to the SPF27 family. Belongs to the 40S cdc5-associated complex (or cwf complex), a spliceosome sub-complex reminiscent of a late-stage spliceosome composed of the U2, U5 and U6 snRNAs and at least brr2, cdc5, cwf2/prp3, cwf3/syf1, cwf4/syf3, cwf5/ecm2, spp42/cwf6, cwf7/spf27, cwf8, cwf9, cwf10, cwf11, cwf12, prp45/cwf13, cwf14, cwf15, cwf16, cwf17, cwf18, cwf19, cwf20, cwf21, cwf22, cwf23, cwf24, cwf25, cwf26, cyp7/cwf27, cwf28, cwf29/ist3, lea1, msl1, prp5/cwf1, prp10, prp12/sap130, prp17, prp22, sap61, sap62, sap114, sap145, slu7, smb1, smd1, smd3, smf1, smg1 and syf2.

It localises to the nucleus. Involved in mRNA splicing. The chain is Pre-mRNA-splicing factor cwf7 (cwf7) from Schizosaccharomyces pombe (strain 972 / ATCC 24843) (Fission yeast).